A 102-amino-acid chain; its full sequence is Small ribosomal subunit protein uS10 (102 aa).

Belongs to the universal ribosomal protein uS10 family. In terms of assembly, part of the 30S ribosomal subunit.

In terms of biological role, involved in the binding of tRNA to the ribosomes. This is Small ribosomal subunit protein uS10 from Geobacter metallireducens (strain ATCC 53774 / DSM 7210 / GS-15).